Here is a 102-residue protein sequence, read N- to C-terminus: Carboxysome shell protein CcmK2 (102 aa).

The BMC domain maps to 4–90 (AVGMIETRGF…PHENLEYVLP (87 aa)).

The protein belongs to the bacterial microcompartments protein family. CcmK subfamily. In terms of assembly, homohexamer. Stacked hexamers, with the concave faces together, have also been crystallized. Interacts preferentially with itself, then with CcmK1 and CcmK4a in vitro. May interact with CcmL, this occurs at very high CcmK2 concentrations. Interacts with CcmN and CcmO in the carboxysome.

It is found in the carboxysome. Its function is as follows. Probably the major shell protein of the carboxysome, a polyhedral inclusion where RuBisCO (ribulose bisphosphate carboxylase, rbcL-rbcS) is sequestered. Assembles into hexamers which make sheets that form the facets of the polyhedral carboxysome. The hexamer central pore probably regulates metabolite flux. This is Carboxysome shell protein CcmK2 from Thermosynechococcus vestitus (strain NIES-2133 / IAM M-273 / BP-1).